The chain runs to 138 residues: Putative pre-16S rRNA nuclease (138 aa).

The protein belongs to the YqgF nuclease family.

The protein localises to the cytoplasm. In terms of biological role, could be a nuclease involved in processing of the 5'-end of pre-16S rRNA. The protein is Putative pre-16S rRNA nuclease of Bacteroides fragilis (strain ATCC 25285 / DSM 2151 / CCUG 4856 / JCM 11019 / LMG 10263 / NCTC 9343 / Onslow / VPI 2553 / EN-2).